The following is a 229-amino-acid chain: Cytidylate kinase (229 aa).

12–20 (GPSGSGKGT) provides a ligand contact to ATP.

This sequence belongs to the cytidylate kinase family. Type 1 subfamily.

It is found in the cytoplasm. It catalyses the reaction CMP + ATP = CDP + ADP. The enzyme catalyses dCMP + ATP = dCDP + ADP. The sequence is that of Cytidylate kinase from Stutzerimonas stutzeri (strain A1501) (Pseudomonas stutzeri).